The chain runs to 286 residues: MTFTIMTDSTADLNQTWAEDHDIVLIGLTILCDGEVYETVGPNRISSDYLLKKMKAGSHPQTSQINVGEFEKVFREHARNNKALLYLAFSSVLSGTYQSALMACDLVREDYPDAVIEIVDTLAAAGGEGYLTILAAEARDSGKNLLETKDIVEAVIPRLRTYFLVDDLFHLMRGGRLSKGSAFLGSLASIKPLLWIDEEGKLVPIAKIRGRQKAIKEMVAQVEKDIADSTVIVSYTSDQGSAEKLREELLAHENISDVLMMPLGPVISAHVGPNTLAVFVIGQNSR.

Positions 3–282 (FTIMTDSTAD…PNTLAVFVIG (280 aa)) constitute a DegV domain. Positions 62 and 94 each coordinate hexadecanoate.

In terms of biological role, may bind long-chain fatty acids, such as palmitate, and may play a role in lipid transport or fatty acid metabolism. The polypeptide is DegV domain-containing protein SPs1668 (Streptococcus pyogenes serotype M3 (strain SSI-1)).